The chain runs to 260 residues: Adenosylcobinamide-GDP ribazoletransferase (260 aa).

7 helical membrane passes run 42 to 62 (TWAL…VYKI), 68 to 88 (LTPN…TGAL), 118 to 137 (IGTY…WSAL), 144 to 166 (WLVT…AFMS), 180 to 200 (AGAP…LVLT), 201 to 221 (LALG…AGLI), and 237 to 257 (ILGA…AAFQ).

This sequence belongs to the CobS family. Requires Mg(2+) as cofactor.

It is found in the cell inner membrane. It carries out the reaction alpha-ribazole + adenosylcob(III)inamide-GDP = adenosylcob(III)alamin + GMP + H(+). The enzyme catalyses alpha-ribazole 5'-phosphate + adenosylcob(III)inamide-GDP = adenosylcob(III)alamin 5'-phosphate + GMP + H(+). It functions in the pathway cofactor biosynthesis; adenosylcobalamin biosynthesis; adenosylcobalamin from cob(II)yrinate a,c-diamide: step 7/7. Functionally, joins adenosylcobinamide-GDP and alpha-ribazole to generate adenosylcobalamin (Ado-cobalamin). Also synthesizes adenosylcobalamin 5'-phosphate from adenosylcobinamide-GDP and alpha-ribazole 5'-phosphate. This is Adenosylcobinamide-GDP ribazoletransferase from Bradyrhizobium diazoefficiens (strain JCM 10833 / BCRC 13528 / IAM 13628 / NBRC 14792 / USDA 110).